The following is a 115-amino-acid chain: Large ribosomal subunit protein bL20 (115 aa).

Belongs to the bacterial ribosomal protein bL20 family.

In terms of biological role, binds directly to 23S ribosomal RNA and is necessary for the in vitro assembly process of the 50S ribosomal subunit. It is not involved in the protein synthesizing functions of that subunit. The polypeptide is Large ribosomal subunit protein bL20 (Cytophaga hutchinsonii (strain ATCC 33406 / DSM 1761 / CIP 103989 / NBRC 15051 / NCIMB 9469 / D465)).